Reading from the N-terminus, the 219-residue chain is Guanylate kinase (219 aa).

The Guanylate kinase-like domain maps to 15-194; it reads GLMFVLSSPS…AFAEVQSILK (180 aa). 22 to 29 contacts ATP; the sequence is SPSGAGKT.

It belongs to the guanylate kinase family.

It localises to the cytoplasm. The catalysed reaction is GMP + ATP = GDP + ADP. Its function is as follows. Essential for recycling GMP and indirectly, cGMP. The chain is Guanylate kinase from Nitrobacter hamburgensis (strain DSM 10229 / NCIMB 13809 / X14).